The primary structure comprises 281 residues: Pantothenate synthetase (281 aa).

30–37 (MGNLHQGH) is an ATP binding site. His37 acts as the Proton donor in catalysis. Position 61 (Gln61) interacts with (R)-pantoate. Gln61 lines the beta-alanine pocket. 149–152 (GNKD) serves as a coordination point for ATP. A (R)-pantoate-binding site is contributed by Gln155. Residues Ile178 and 186–189 (MSSR) contribute to the ATP site.

Belongs to the pantothenate synthetase family. In terms of assembly, homodimer.

The protein resides in the cytoplasm. It carries out the reaction (R)-pantoate + beta-alanine + ATP = (R)-pantothenate + AMP + diphosphate + H(+). The protein operates within cofactor biosynthesis; (R)-pantothenate biosynthesis; (R)-pantothenate from (R)-pantoate and beta-alanine: step 1/1. Functionally, catalyzes the condensation of pantoate with beta-alanine in an ATP-dependent reaction via a pantoyl-adenylate intermediate. In Shewanella oneidensis (strain ATCC 700550 / JCM 31522 / CIP 106686 / LMG 19005 / NCIMB 14063 / MR-1), this protein is Pantothenate synthetase.